We begin with the raw amino-acid sequence, 171 residues long: S-ribosylhomocysteine lyase (171 aa).

His54, His58, and Cys128 together coordinate Fe cation.

Belongs to the LuxS family. As to quaternary structure, homodimer. Fe cation serves as cofactor.

The catalysed reaction is S-(5-deoxy-D-ribos-5-yl)-L-homocysteine = (S)-4,5-dihydroxypentane-2,3-dione + L-homocysteine. Its function is as follows. Involved in the synthesis of autoinducer 2 (AI-2) which is secreted by bacteria and is used to communicate both the cell density and the metabolic potential of the environment. The regulation of gene expression in response to changes in cell density is called quorum sensing. Catalyzes the transformation of S-ribosylhomocysteine (RHC) to homocysteine (HC) and 4,5-dihydroxy-2,3-pentadione (DPD). This is S-ribosylhomocysteine lyase from Yersinia pseudotuberculosis serotype O:1b (strain IP 31758).